An 807-amino-acid chain; its full sequence is Glycerol-3-phosphate acyltransferase (807 aa).

The HXXXXD motif signature appears at 308–313; the sequence is CHRSHM.

The protein belongs to the GPAT/DAPAT family.

Its subcellular location is the cell inner membrane. The enzyme catalyses sn-glycerol 3-phosphate + an acyl-CoA = a 1-acyl-sn-glycero-3-phosphate + CoA. The protein operates within phospholipid metabolism; CDP-diacylglycerol biosynthesis; CDP-diacylglycerol from sn-glycerol 3-phosphate: step 1/3. In Shewanella woodyi (strain ATCC 51908 / MS32), this protein is Glycerol-3-phosphate acyltransferase.